We begin with the raw amino-acid sequence, 213 residues long: Probable nicotinate-nucleotide adenylyltransferase (213 aa).

Belongs to the NadD family.

The catalysed reaction is nicotinate beta-D-ribonucleotide + ATP + H(+) = deamido-NAD(+) + diphosphate. It functions in the pathway cofactor biosynthesis; NAD(+) biosynthesis; deamido-NAD(+) from nicotinate D-ribonucleotide: step 1/1. Its function is as follows. Catalyzes the reversible adenylation of nicotinate mononucleotide (NaMN) to nicotinic acid adenine dinucleotide (NaAD). This Citrobacter koseri (strain ATCC BAA-895 / CDC 4225-83 / SGSC4696) protein is Probable nicotinate-nucleotide adenylyltransferase.